Here is a 499-residue protein sequence, read N- to C-terminus: Glutamate--tRNA ligase (499 aa).

The 'HIGH' region motif lies at Pro-10 to Met-20. A 'KMSKS' region motif is present at residues Lys-255 to Arg-259. Lys-258 is a binding site for ATP.

This sequence belongs to the class-I aminoacyl-tRNA synthetase family. Glutamate--tRNA ligase type 1 subfamily. Monomer.

The protein localises to the cytoplasm. The catalysed reaction is tRNA(Glu) + L-glutamate + ATP = L-glutamyl-tRNA(Glu) + AMP + diphosphate. Functionally, catalyzes the attachment of glutamate to tRNA(Glu) in a two-step reaction: glutamate is first activated by ATP to form Glu-AMP and then transferred to the acceptor end of tRNA(Glu). The polypeptide is Glutamate--tRNA ligase (Corynebacterium urealyticum (strain ATCC 43042 / DSM 7109)).